A 264-amino-acid polypeptide reads, in one-letter code: Probable aquaporin TIP3-1 (264 aa).

A run of 2 helical transmembrane segments spans residues 28–48 and 62–82; these read AAIS…GSIL and GLVA…AVAV. The short motif at 90-92 is the NPA 1 element; sequence NPA. Transmembrane regions (helical) follow at residues 105–125, 149–169, and 176–196; these read LIRA…ATLL, AVLL…ATVI, and VGTI…LAGG. Residues 204–206 carry the NPA 2 motif; it reads NPA. Residues 224–244 form a helical membrane-spanning segment; it reads YWLGPFVGAGLAGLLYEYLVI.

The protein belongs to the MIP/aquaporin (TC 1.A.8) family. TIP (TC 1.A.8.10) subfamily. Expressed in leaves and at lower levels in roots.

The protein resides in the vacuole membrane. Functionally, aquaporins facilitate the transport of water and small neutral solutes across cell membranes. May be involved in transport from the vacuolar compartment to the cytoplasm. The chain is Probable aquaporin TIP3-1 (TIP3-1) from Oryza sativa subsp. japonica (Rice).